Reading from the N-terminus, the 879-residue chain is Alanine--tRNA ligase (879 aa).

His-566, His-570, Cys-668, and His-672 together coordinate Zn(2+).

It belongs to the class-II aminoacyl-tRNA synthetase family. Zn(2+) serves as cofactor.

It is found in the cytoplasm. It catalyses the reaction tRNA(Ala) + L-alanine + ATP = L-alanyl-tRNA(Ala) + AMP + diphosphate. In terms of biological role, catalyzes the attachment of alanine to tRNA(Ala) in a two-step reaction: alanine is first activated by ATP to form Ala-AMP and then transferred to the acceptor end of tRNA(Ala). Also edits incorrectly charged Ser-tRNA(Ala) and Gly-tRNA(Ala) via its editing domain. The chain is Alanine--tRNA ligase from Listeria welshimeri serovar 6b (strain ATCC 35897 / DSM 20650 / CCUG 15529 / CIP 8149 / NCTC 11857 / SLCC 5334 / V8).